The sequence spans 664 residues: ATP-dependent RNA helicase MSS116, mitochondrial (664 aa).

The N-terminal 26 residues, 1–26 (MLTSILIKGRTPVLASRNLLAALSNC), are a transit peptide targeting the mitochondrion. Residues 42-79 (NRDQRNFGRNQRNNNSNRYRNSRFNSRPRTRSREDDDE) are disordered. Residues 48–68 (FGRNQRNNNSNRYRNSRFNSR) show a composition bias toward low complexity. The short motif at 106 to 134 (SLLEEGVLDKEIHKAITRMEFPGLTPVQQ) is the Q motif element. One can recognise a Helicase ATP-binding domain in the interval 139-326 (PILSSEDHDV…NNIMNKKECL (188 aa)). Residue 152–159 (AKTGTGKT) coordinates ATP. Positions 267–270 (DEAD) match the DEAD box motif. In terms of domain architecture, Helicase C-terminal spans 355–512 (SIFAAVEHIK…EKYEPSEEIK (158 aa)). Residues 602–664 (GNNKSYDYDD…NYSSRNSNIY (63 aa)) are disordered. Residues 628-638 (QNRDYDDEPFR) are compositionally biased toward basic and acidic residues. Low complexity predominate over residues 639–649 (RSNNNRRSFSR). A compositionally biased stretch (polar residues) spans 653-664 (KNNYSSRNSNIY).

The protein belongs to the DEAD box helicase family. DDX18/HAS1 subfamily.

The protein localises to the mitochondrion matrix. The enzyme catalyses ATP + H2O = ADP + phosphate + H(+). ATP-dependent RNA helicase required for mitochondrial splicing of group I and II introns. Specifically involved in the ATP-dependent splicing of the bl1 intron of COB. Also required for efficient mitochondrial translation. The chain is ATP-dependent RNA helicase MSS116, mitochondrial (MSS116) from Saccharomyces cerevisiae (strain ATCC 204508 / S288c) (Baker's yeast).